A 343-amino-acid polypeptide reads, in one-letter code: Dipeptide transport system permease protein DppC (343 aa).

Transmembrane regions (helical) follow at residues Leu44 to Val64, Leu144 to Ile164, Leu195 to Trp215, Gly259 to Leu279, and Phe309 to Gly329. The ABC transmembrane type-1 domain maps to Leu140–Gly329.

The protein belongs to the binding-protein-dependent transport system permease family. OppBC subfamily. As to quaternary structure, the complex is composed of two ATP-binding proteins (DppD and DppF), two transmembrane proteins (DppB and DppC) and a solute-binding protein (DppA).

Its subcellular location is the cell membrane. Functionally, part of the ABC transporter DppABCDF involved in dipeptide transport. Responsible for the translocation of the substrate across the membrane. In Lactococcus lactis subsp. cremoris (strain MG1363), this protein is Dipeptide transport system permease protein DppC.